Reading from the N-terminus, the 469-residue chain is Phenylalanine--tRNA ligase, mitochondrial (469 aa).

Residues 1–17 (MFLNRMMKTRTGLYRLY) constitute a mitochondrion transit peptide. Substrate-binding positions include 126-129 (SAHE), Arg155, 162-164 (THY), 169-171 (QME), Glu302, and Phe329. Residues 372 to 469 (SKHPGSFRDV…LVKEYSVELR (98 aa)) enclose the FDX-ACB domain.

Belongs to the class-II aminoacyl-tRNA synthetase family. As to quaternary structure, monomer.

The protein localises to the mitochondrion matrix. It carries out the reaction tRNA(Phe) + L-phenylalanine + ATP = L-phenylalanyl-tRNA(Phe) + AMP + diphosphate + H(+). In terms of biological role, is responsible for the charging of tRNA(Phe) with phenylalanine in mitochondrial translation. The sequence is that of Phenylalanine--tRNA ligase, mitochondrial (MSF1) from Saccharomyces cerevisiae (strain ATCC 204508 / S288c) (Baker's yeast).